The primary structure comprises 174 residues: Ribosome maturation factor RimM (174 aa).

In terms of domain architecture, PRC barrel spans D95 to F174.

It belongs to the RimM family. Binds ribosomal protein uS19.

It is found in the cytoplasm. Functionally, an accessory protein needed during the final step in the assembly of 30S ribosomal subunit, possibly for assembly of the head region. Essential for efficient processing of 16S rRNA. May be needed both before and after RbfA during the maturation of 16S rRNA. It has affinity for free ribosomal 30S subunits but not for 70S ribosomes. The protein is Ribosome maturation factor RimM of Idiomarina loihiensis (strain ATCC BAA-735 / DSM 15497 / L2-TR).